The following is a 366-amino-acid chain: Cobalt-precorrin-5B C(1)-methyltransferase (366 aa).

The protein belongs to the CbiD family.

The enzyme catalyses Co-precorrin-5B + S-adenosyl-L-methionine = Co-precorrin-6A + S-adenosyl-L-homocysteine. It functions in the pathway cofactor biosynthesis; adenosylcobalamin biosynthesis; cob(II)yrinate a,c-diamide from sirohydrochlorin (anaerobic route): step 6/10. Catalyzes the methylation of C-1 in cobalt-precorrin-5B to form cobalt-precorrin-6A. The sequence is that of Cobalt-precorrin-5B C(1)-methyltransferase from Thermoanaerobacter sp. (strain X514).